The following is a 108-amino-acid chain: Parvalbumin beta (108 aa).

2 consecutive EF-hand domains span residues 38-73 (KPTD…FCSS) and 77-108 (LSNA…LVRS). Asp-51, Asp-53, Ser-55, Tyr-57, Glu-59, Glu-62, Asp-90, Asp-92, Asp-94, Lys-96, and Glu-101 together coordinate Ca(2+).

This sequence belongs to the parvalbumin family.

Functionally, in muscle, parvalbumin is thought to be involved in relaxation after contraction. It binds two calcium ions. The chain is Parvalbumin beta from Amphiuma means (Salamander).